The following is a 167-amino-acid chain: uncharacterized protein (167 aa).

The next 4 helical transmembrane spans lie at 13 to 33 (LIYL…TWLI), 37 to 57 (VLAV…FLPY), 61 to 81 (WFAL…KIGE), and 103 to 123 (LLLI…LVPS).

Its subcellular location is the cell membrane. This is an uncharacterized protein from Haemophilus influenzae (strain ATCC 51907 / DSM 11121 / KW20 / Rd).